Reading from the N-terminus, the 281-residue chain is NADPH-dependent 7-cyano-7-deazaguanine reductase (281 aa).

86–88 serves as a coordination point for substrate; the sequence is IES. 88–89 serves as a coordination point for NADPH; sequence SK. Cysteine 189 acts as the Thioimide intermediate in catalysis. Aspartate 196 acts as the Proton donor in catalysis. 228-229 provides a ligand contact to substrate; the sequence is HE. 257-258 contributes to the NADPH binding site; that stretch reads RG.

This sequence belongs to the GTP cyclohydrolase I family. QueF type 2 subfamily. Homodimer.

It is found in the cytoplasm. The enzyme catalyses 7-aminomethyl-7-carbaguanine + 2 NADP(+) = 7-cyano-7-deazaguanine + 2 NADPH + 3 H(+). It functions in the pathway tRNA modification; tRNA-queuosine biosynthesis. Its function is as follows. Catalyzes the NADPH-dependent reduction of 7-cyano-7-deazaguanine (preQ0) to 7-aminomethyl-7-deazaguanine (preQ1). This Mannheimia succiniciproducens (strain KCTC 0769BP / MBEL55E) protein is NADPH-dependent 7-cyano-7-deazaguanine reductase.